We begin with the raw amino-acid sequence, 310 residues long: Probable manganese-dependent inorganic pyrophosphatase (310 aa).

Mn(2+) is bound by residues His-9, Asp-13, Asp-15, Asp-76, His-98, and Asp-150.

This sequence belongs to the PPase class C family. Homodimer. Mn(2+) serves as cofactor.

The protein localises to the cytoplasm. It catalyses the reaction diphosphate + H2O = 2 phosphate + H(+). The polypeptide is Probable manganese-dependent inorganic pyrophosphatase (ppaC) (Streptococcus mutans serotype c (strain ATCC 700610 / UA159)).